The following is a 292-amino-acid chain: Ribonuclease Z (292 aa).

His-60, His-62, Asp-64, His-65, His-132, Asp-200, and His-256 together coordinate Zn(2+). Asp-64 (proton acceptor) is an active-site residue.

This sequence belongs to the RNase Z family. In terms of assembly, homodimer. Zn(2+) is required as a cofactor.

It carries out the reaction Endonucleolytic cleavage of RNA, removing extra 3' nucleotides from tRNA precursor, generating 3' termini of tRNAs. A 3'-hydroxy group is left at the tRNA terminus and a 5'-phosphoryl group is left at the trailer molecule.. Zinc phosphodiesterase, which displays some tRNA 3'-processing endonuclease activity. Probably involved in tRNA maturation, by removing a 3'-trailer from precursor tRNA. This chain is Ribonuclease Z, found in Sulfolobus acidocaldarius (strain ATCC 33909 / DSM 639 / JCM 8929 / NBRC 15157 / NCIMB 11770).